A 154-amino-acid polypeptide reads, in one-letter code: Probable chemoreceptor glutamine deamidase CheD (154 aa).

This sequence belongs to the CheD family.

It carries out the reaction L-glutaminyl-[protein] + H2O = L-glutamyl-[protein] + NH4(+). In terms of biological role, probably deamidates glutamine residues to glutamate on methyl-accepting chemotaxis receptors (MCPs), playing an important role in chemotaxis. This Methanococcus maripaludis (strain C5 / ATCC BAA-1333) protein is Probable chemoreceptor glutamine deamidase CheD.